The sequence spans 528 residues: Na(+)/H(+) antiporter NhaB (528 aa).

10 helical membrane-spanning segments follow: residues 11-31 (VNFL…FLVI), 67-87 (PGGL…SQVL), 98-118 (LLLI…LFVF), 140-160 (AFLS…AVGI), 240-260 (FFIR…LTCV), 311-331 (LVAG…SVII), 350-370 (EEAL…GVII), 391-411 (LVVF…VFVG), 449-469 (ATPN…APLI), and 476-496 (MVIM…VTIE).

The protein belongs to the NhaB Na(+)/H(+) (TC 2.A.34) antiporter family.

Its subcellular location is the cell inner membrane. The catalysed reaction is 2 Na(+)(in) + 3 H(+)(out) = 2 Na(+)(out) + 3 H(+)(in). In terms of biological role, na(+)/H(+) antiporter that extrudes sodium in exchange for external protons. This chain is Na(+)/H(+) antiporter NhaB, found in Shewanella denitrificans (strain OS217 / ATCC BAA-1090 / DSM 15013).